The following is a 71-amino-acid chain: DNA-directed RNA polymerase subunit epsilon (71 aa).

It belongs to the RNA polymerase subunit epsilon family. As to quaternary structure, monomer. RNAP is composed of a core of 2 alpha, a beta and a beta' subunit. The core is associated with a delta subunit, and at least one of epsilon or omega. When a sigma factor is associated with the core the holoenzyme is formed, which can initiate transcription.

The enzyme catalyses RNA(n) + a ribonucleoside 5'-triphosphate = RNA(n+1) + diphosphate. In terms of biological role, a non-essential component of RNA polymerase (RNAP). Has a similar structure to bacteriophage T7 protein Gp2 (AC P03704), which is known to bind to RNAP in the DNA binding-cleft. Unlike Gp2 however, this protein does not inhibit transcription initiation. The protein is DNA-directed RNA polymerase subunit epsilon of Geobacillus stearothermophilus (strain DSM 13240 / CIP 106956 / 10).